The primary structure comprises 106 residues: Somatoliberin (106 aa).

The N-terminal stretch at 1-19 is a signal peptide; sequence MLLWVFFLVTLTLSSGSHG. Positions 20–30 are excised as a propeptide; the sequence is SLPSQPLRIPR. Position 74 is a leucine amide (L74). A propeptide spanning residues 77–106 is cleaved from the precursor; that stretch reads QVDGVWTDQQQMALESTLVSLLQERRNSQG.

The protein belongs to the glucagon family.

It localises to the secreted. GRF is released by the hypothalamus and acts on the adenohypophyse to stimulate the secretion of growth hormone. In Bos taurus (Bovine), this protein is Somatoliberin (GHRH).